The chain runs to 231 residues: Acyl-protein thioesterase 1 (231 aa).

Residues serine 121, aspartate 178, and histidine 211 each act as charge relay system in the active site.

This sequence belongs to the AB hydrolase superfamily. AB hydrolase 2 family.

The protein resides in the cytoplasm. Its subcellular location is the nucleus. The enzyme catalyses S-hexadecanoyl-L-cysteinyl-[protein] + H2O = L-cysteinyl-[protein] + hexadecanoate + H(+). Hydrolyzes fatty acids from S-acylated cysteine residues in proteins with a strong preference for palmitoylated G-alpha proteins over other acyl substrates. Mediates the deacylation of G-alpha proteins such as GPA1 in vivo, but has weak or no activity toward palmitoylated Ras proteins. Has weak lysophospholipase activity in vitro; however such activity may not exist in vivo. The sequence is that of Acyl-protein thioesterase 1 from Candida albicans (strain SC5314 / ATCC MYA-2876) (Yeast).